Here is a 72-residue protein sequence, read N- to C-terminus: SRY-related protein MG42 (72 aa).

The segment at residues 1 to 69 (VKRPMNAFMV…KHMADYPNYK (69 aa)) is a DNA-binding region (HMG box).

The protein resides in the nucleus. This is SRY-related protein MG42 from Tarentola mauritanica (Common wall gecko).